Reading from the N-terminus, the 104-residue chain is Large ribosomal subunit protein uL24 (104 aa).

The protein belongs to the universal ribosomal protein uL24 family. In terms of assembly, part of the 50S ribosomal subunit.

Its function is as follows. One of two assembly initiator proteins, it binds directly to the 5'-end of the 23S rRNA, where it nucleates assembly of the 50S subunit. One of the proteins that surrounds the polypeptide exit tunnel on the outside of the subunit. This Shewanella piezotolerans (strain WP3 / JCM 13877) protein is Large ribosomal subunit protein uL24.